Here is a 277-residue protein sequence, read N- to C-terminus: Small ribosomal subunit protein uS3 (277 aa).

The 69-residue stretch at 43–111 folds into the KH type-2 domain; it reads IRQLMSTGME…QVQLNILEVK (69 aa). Residues 218–228 show a composition bias toward low complexity; sequence QQAAAAPSRGR. Residues 218 to 277 form a disordered region; sequence QQAAAAPSRGRGASDRPGRPGGADRGDRRRRTDRPAAEAAPAAEAPAVEAAAPAVEGGQA. A compositionally biased stretch (basic and acidic residues) spans 229-244; it reads GASDRPGRPGGADRGD. A compositionally biased stretch (low complexity) spans 254–277; sequence AEAAPAAEAPAVEAAAPAVEGGQA.

This sequence belongs to the universal ribosomal protein uS3 family. In terms of assembly, part of the 30S ribosomal subunit. Forms a tight complex with proteins S10 and S14.

Binds the lower part of the 30S subunit head. Binds mRNA in the 70S ribosome, positioning it for translation. This is Small ribosomal subunit protein uS3 from Arthrobacter sp. (strain FB24).